The chain runs to 316 residues: Glutathione synthetase (316 aa).

One can recognise an ATP-grasp domain in the interval 125-310 (KLFTAWFSDL…ITGMLMDAIE (186 aa)). An N-beta-linked (GlcNAc) arginine glycan is attached at arginine 256. Positions 281 and 283 each coordinate Mg(2+).

The protein belongs to the prokaryotic GSH synthase family. Mg(2+) is required as a cofactor. Mn(2+) serves as cofactor.

It carries out the reaction gamma-L-glutamyl-L-cysteine + glycine + ATP = glutathione + ADP + phosphate + H(+). It participates in sulfur metabolism; glutathione biosynthesis; glutathione from L-cysteine and L-glutamate: step 2/2. This Escherichia coli O127:H6 (strain E2348/69 / EPEC) protein is Glutathione synthetase.